The chain runs to 159 residues: Ribosomal RNA large subunit methyltransferase H (159 aa).

S-adenosyl-L-methionine is bound by residues leucine 76, glycine 108, and 127–132 (LSKMTY).

Belongs to the RNA methyltransferase RlmH family. As to quaternary structure, homodimer.

The protein localises to the cytoplasm. It catalyses the reaction pseudouridine(1915) in 23S rRNA + S-adenosyl-L-methionine = N(3)-methylpseudouridine(1915) in 23S rRNA + S-adenosyl-L-homocysteine + H(+). Its function is as follows. Specifically methylates the pseudouridine at position 1915 (m3Psi1915) in 23S rRNA. The chain is Ribosomal RNA large subunit methyltransferase H from Ruminiclostridium cellulolyticum (strain ATCC 35319 / DSM 5812 / JCM 6584 / H10) (Clostridium cellulolyticum).